The chain runs to 528 residues: ATP synthase subunit alpha 1 (528 aa).

169 to 176 (GDRQTGKT) is a binding site for ATP.

The protein belongs to the ATPase alpha/beta chains family. As to quaternary structure, F-type ATPases have 2 components, CF(1) - the catalytic core - and CF(0) - the membrane proton channel. CF(1) has five subunits: alpha(3), beta(3), gamma(1), delta(1), epsilon(1). CF(0) has three main subunits: a(1), b(2) and c(9-12). The alpha and beta chains form an alternating ring which encloses part of the gamma chain. CF(1) is attached to CF(0) by a central stalk formed by the gamma and epsilon chains, while a peripheral stalk is formed by the delta and b chains.

The protein localises to the cell membrane. The enzyme catalyses ATP + H2O + 4 H(+)(in) = ADP + phosphate + 5 H(+)(out). Its function is as follows. Produces ATP from ADP in the presence of a proton gradient across the membrane. The alpha chain is a regulatory subunit. This is ATP synthase subunit alpha 1 from Mycoplasmopsis pulmonis (strain UAB CTIP) (Mycoplasma pulmonis).